A 168-amino-acid polypeptide reads, in one-letter code: Peptide deformylase (168 aa).

2 residues coordinate Fe cation: Cys-92 and His-134. The active site involves Glu-135. His-138 serves as a coordination point for Fe cation.

It belongs to the polypeptide deformylase family. The cofactor is Fe(2+).

It carries out the reaction N-terminal N-formyl-L-methionyl-[peptide] + H2O = N-terminal L-methionyl-[peptide] + formate. Its function is as follows. Removes the formyl group from the N-terminal Met of newly synthesized proteins. Requires at least a dipeptide for an efficient rate of reaction. N-terminal L-methionine is a prerequisite for activity but the enzyme has broad specificity at other positions. The protein is Peptide deformylase of Teredinibacter turnerae (strain ATCC 39867 / T7901).